The sequence spans 238 residues: DNA repair protein RecO (238 aa).

This sequence belongs to the RecO family.

Its function is as follows. Involved in DNA repair and RecF pathway recombination. This Flavobacterium psychrophilum (strain ATCC 49511 / DSM 21280 / CIP 103535 / JIP02/86) protein is DNA repair protein RecO.